The sequence spans 376 residues: Hydroxylysine kinase (376 aa).

Residue aspartate 229 is the Proton acceptor of the active site.

Belongs to the aminoglycoside phosphotransferase family.

The protein resides in the cytoplasm. It carries out the reaction (5R)-5-hydroxy-L-lysine + GTP = (5R)-5-phosphooxy-L-lysine + GDP + H(+). Catalyzes the GTP-dependent phosphorylation of 5-hydroxy-L-lysine. This is Hydroxylysine kinase (Hykk) from Mus musculus (Mouse).